The following is a 255-amino-acid chain: Tryptophan synthase alpha chain (255 aa).

Active-site proton acceptor residues include E44 and D55.

Belongs to the TrpA family. As to quaternary structure, tetramer of two alpha and two beta chains.

The catalysed reaction is (1S,2R)-1-C-(indol-3-yl)glycerol 3-phosphate + L-serine = D-glyceraldehyde 3-phosphate + L-tryptophan + H2O. Its pathway is amino-acid biosynthesis; L-tryptophan biosynthesis; L-tryptophan from chorismate: step 5/5. Functionally, the alpha subunit is responsible for the aldol cleavage of indoleglycerol phosphate to indole and glyceraldehyde 3-phosphate. The polypeptide is Tryptophan synthase alpha chain (Dehalococcoides mccartyi (strain ATCC BAA-2100 / JCM 16839 / KCTC 5957 / BAV1)).